The primary structure comprises 185 residues: Ribosome-recycling factor (185 aa).

Belongs to the RRF family.

Its subcellular location is the cytoplasm. Its function is as follows. Responsible for the release of ribosomes from messenger RNA at the termination of protein biosynthesis. May increase the efficiency of translation by recycling ribosomes from one round of translation to another. The chain is Ribosome-recycling factor from Corynebacterium glutamicum (strain R).